The chain runs to 384 residues: Geranylgeranyl pyrophosphate synthase (384 aa).

Disordered regions lie at residues Met-1–Thr-25 and Arg-39–Tyr-78. A compositionally biased stretch (polar residues) spans Leu-47 to Ile-62. 3 residues coordinate isopentenyl diphosphate: Lys-112, Arg-115, and His-144. Residues Asp-151 and Asp-155 each contribute to the Mg(2+) site. Dimethylallyl diphosphate is bound at residue Arg-160. Residue Arg-161 participates in isopentenyl diphosphate binding. Dimethylallyl diphosphate is bound by residues Lys-238, Thr-239, and Gln-272. Asp-275 lines the Mg(2+) pocket. Residues Asn-279, Lys-289, and Lys-299 each contribute to the dimethylallyl diphosphate site.

The protein belongs to the FPP/GGPP synthase family. Mg(2+) is required as a cofactor.

It catalyses the reaction isopentenyl diphosphate + dimethylallyl diphosphate = (2E)-geranyl diphosphate + diphosphate. The catalysed reaction is isopentenyl diphosphate + (2E)-geranyl diphosphate = (2E,6E)-farnesyl diphosphate + diphosphate. The enzyme catalyses isopentenyl diphosphate + (2E,6E)-farnesyl diphosphate = (2E,6E,10E)-geranylgeranyl diphosphate + diphosphate. Its pathway is secondary metabolite biosynthesis. In terms of biological role, catalyzes the trans-addition of the 3 molecules of isopentenyl diphosphate (IPP) onto dimethylallyl diphosphate (DMAPP) to form geranylgeranyl pyrophosphate (GGPP). GGPP is a precursor for the biosynthesis of many secondary metabolites, including the indole diterpenes nodulisporic acids (NA). The chain is Geranylgeranyl pyrophosphate synthase from Hypoxylon pulicicidum.